Here is a 237-residue protein sequence, read N- to C-terminus: UPF0174 protein YaaW (237 aa).

It belongs to the UPF0174 family.

In Escherichia coli O157:H7, this protein is UPF0174 protein YaaW.